A 415-amino-acid chain; its full sequence is Multidrug resistance protein MdtA (415 aa).

Positions 1-21 (MKGSYKSRWVIVIVVVIAAIA) are cleaved as a signal peptide. 2 disordered regions span residues 32 to 60 (SRSA…GPLA) and 392 to 415 (EAQS…GARS). Residues 399–415 (PEEKATSREYAKKGARS) show a composition bias toward basic and acidic residues.

This sequence belongs to the membrane fusion protein (MFP) (TC 8.A.1) family. In terms of assembly, part of a tripartite efflux system composed of MdtA, MdtB and MdtC.

Its subcellular location is the cell inner membrane. The MdtABC tripartite complex confers resistance against novobiocin and deoxycholate. This chain is Multidrug resistance protein MdtA, found in Escherichia coli O81 (strain ED1a).